The sequence spans 271 residues: Co-chaperone protein DjlA (271 aa).

Over 1-6 (MQYWGK) the chain is Periplasmic. A helical transmembrane segment spans residues 7 to 31 (IIGVAVALLMGGGFWGVVLGLLIGH). At 32 to 271 (MFDKARSRKM…ELIKQQKGFK (240 aa)) the chain is on the cytoplasmic side. In terms of domain architecture, J spans 205–271 (DACNVLGVKP…ELIKQQKGFK (67 aa)).

In terms of assembly, homodimer.

It localises to the cell inner membrane. In terms of biological role, regulatory DnaK co-chaperone. Direct interaction between DnaK and DjlA is needed for the induction of the wcaABCDE operon, involved in the synthesis of a colanic acid polysaccharide capsule, possibly through activation of the RcsB/RcsC phosphotransfer signaling pathway. The colanic acid capsule may help the bacterium survive conditions outside the host. This Escherichia coli (strain K12) protein is Co-chaperone protein DjlA.